Here is an 87-residue protein sequence, read N- to C-terminus: Phosphoribosyl-ATP pyrophosphatase (87 aa).

It belongs to the PRA-PH family.

The protein localises to the cytoplasm. The catalysed reaction is 1-(5-phospho-beta-D-ribosyl)-ATP + H2O = 1-(5-phospho-beta-D-ribosyl)-5'-AMP + diphosphate + H(+). It participates in amino-acid biosynthesis; L-histidine biosynthesis; L-histidine from 5-phospho-alpha-D-ribose 1-diphosphate: step 2/9. The polypeptide is Phosphoribosyl-ATP pyrophosphatase (hisE) (Corynebacterium glutamicum (strain ATCC 13032 / DSM 20300 / JCM 1318 / BCRC 11384 / CCUG 27702 / LMG 3730 / NBRC 12168 / NCIMB 10025 / NRRL B-2784 / 534)).